Consider the following 550-residue polypeptide: Chaperonin GroEL (550 aa).

ATP is bound by residues 29–32 (TAGP), Lys50, 86–90 (DGTTT), Gly417, and Asp499.

Belongs to the chaperonin (HSP60) family. As to quaternary structure, forms a cylinder of 14 subunits composed of two heptameric rings stacked back-to-back. Interacts with the co-chaperonin GroES.

Its subcellular location is the cytoplasm. It catalyses the reaction ATP + H2O + a folded polypeptide = ADP + phosphate + an unfolded polypeptide.. Functionally, together with its co-chaperonin GroES, plays an essential role in assisting protein folding. The GroEL-GroES system forms a nano-cage that allows encapsulation of the non-native substrate proteins and provides a physical environment optimized to promote and accelerate protein folding. This chain is Chaperonin GroEL, found in Ehrlichia chaffeensis.